Reading from the N-terminus, the 261-residue chain is Imidazole glycerol phosphate synthase subunit HisF (261 aa).

Active-site residues include aspartate 16 and aspartate 135.

Belongs to the HisA/HisF family. In terms of assembly, heterodimer of HisH and HisF.

It localises to the cytoplasm. It carries out the reaction 5-[(5-phospho-1-deoxy-D-ribulos-1-ylimino)methylamino]-1-(5-phospho-beta-D-ribosyl)imidazole-4-carboxamide + L-glutamine = D-erythro-1-(imidazol-4-yl)glycerol 3-phosphate + 5-amino-1-(5-phospho-beta-D-ribosyl)imidazole-4-carboxamide + L-glutamate + H(+). It functions in the pathway amino-acid biosynthesis; L-histidine biosynthesis; L-histidine from 5-phospho-alpha-D-ribose 1-diphosphate: step 5/9. Its function is as follows. IGPS catalyzes the conversion of PRFAR and glutamine to IGP, AICAR and glutamate. The HisF subunit catalyzes the cyclization activity that produces IGP and AICAR from PRFAR using the ammonia provided by the HisH subunit. This is Imidazole glycerol phosphate synthase subunit HisF from Mycobacterium leprae (strain Br4923).